We begin with the raw amino-acid sequence, 237 residues long: Uridylate kinase (237 aa).

9–12 (KFSG) contacts ATP. The involved in allosteric activation by GTP stretch occupies residues 17-22 (GEAGYG). Residue Gly-51 coordinates UMP. 2 residues coordinate ATP: Gly-52 and Arg-56. Residues Asp-72 and 133–140 (TGNPFFTT) contribute to the UMP site. Residues Thr-160, Tyr-166, and Asp-169 each coordinate ATP.

The protein belongs to the UMP kinase family. Homohexamer.

It is found in the cytoplasm. It carries out the reaction UMP + ATP = UDP + ADP. Its pathway is pyrimidine metabolism; CTP biosynthesis via de novo pathway; UDP from UMP (UMPK route): step 1/1. Its activity is regulated as follows. Allosterically activated by GTP. Inhibited by UTP. Functionally, catalyzes the reversible phosphorylation of UMP to UDP. The sequence is that of Uridylate kinase from Sulfurimonas denitrificans (strain ATCC 33889 / DSM 1251) (Thiomicrospira denitrificans (strain ATCC 33889 / DSM 1251)).